We begin with the raw amino-acid sequence, 959 residues long: MSDDKRAKPEKSKYPVNLLDTPFPMRGDLPKREPQWVKQWQDKQLYKKIRAARHGAKKFVLHDGPPYANGDIHIGHAVNKVLKDMIIKARGLTGLDAVYVPGWDCHGMPIEIQIEKQFGKGLPVQEVQSKARAYATEQIARQRKDFERLGVLGDWENPYLTMNFSNEADELRALGKIMERGYVFRGLKPVNWCFDCGSALAEAEVEYKDKVDLSIDVGFPFAETDKIAHAFHVPLAQLEGKPGWIVIWTTTPWTIPSNQALNMHPEVEYALVDTPRGFLILAKDRVEEQLKTYALEGTIVATARGDALTEVRFHHPLAKMDAGYVRTSPVYLGDYVTTDTGTGIVHSAPAYGVEDFQSCKAHGMPDSDIISPVMGDGVYASTLPLFGGLSIWDANPKIVEVLRESGNLFNSHKYEHSYMHCWRHKTPIIYRATSQWFAGMDVDPVDNGPTLRETALAGIEATEFYPAWGKQRLHNMIANRPDWTLSRQRQWGVPMAFFVHKETGALHPRTPELLEEVAKLVEKHGIEAWQTLDPKDLLGDEAAQYEKNRDTLDVWFDSGTTHWTVIRGSHRDELYDPAADLPDGRLADLYLEGSDQHRGWFHSSLLTASMLYGKPPYKALLTHGFTVDGEGRKMSKSVGNTVSPQDISNKMGAEIIRLWVASTDYSGELSISDEILKRVVEGYRRIRNTLRFLLANLTDYDHAKHALPASEWLEIDRYAVALTDRLQKEVLSHYQAYEFHPVVAKLQTFCSEDLGGFYLDVLKDRLYTTAADSKARRGAQNALYHITQAMLHWMAPFLTFTAEEAWQIFAHGTEHKDTIFTSTYYAIPSVDDGDTLLQKWHEIRTVRAEVTRQLEAVRVEGDIGSSLQAEVTIAAGGPVLAALQSLEDDLRFVLLTSAAKVTPAPEGGDLLVTVTPSQHAKCERCWHYRADVGHNPEHPTICGRCDSNLFGAGEHRSHA.

The 'HIGH' region motif lies at Pro-66–His-76. Glu-592 is an L-isoleucyl-5'-AMP binding site. The short motif at Lys-633–Ser-637 is the 'KMSKS' region element. Residue Lys-636 coordinates ATP. Residues Cys-922, Cys-925, Cys-942, and Cys-945 each coordinate Zn(2+).

Belongs to the class-I aminoacyl-tRNA synthetase family. IleS type 1 subfamily. In terms of assembly, monomer. Zn(2+) is required as a cofactor.

Its subcellular location is the cytoplasm. It catalyses the reaction tRNA(Ile) + L-isoleucine + ATP = L-isoleucyl-tRNA(Ile) + AMP + diphosphate. Functionally, catalyzes the attachment of isoleucine to tRNA(Ile). As IleRS can inadvertently accommodate and process structurally similar amino acids such as valine, to avoid such errors it has two additional distinct tRNA(Ile)-dependent editing activities. One activity is designated as 'pretransfer' editing and involves the hydrolysis of activated Val-AMP. The other activity is designated 'posttransfer' editing and involves deacylation of mischarged Val-tRNA(Ile). The chain is Isoleucine--tRNA ligase from Cupriavidus metallidurans (strain ATCC 43123 / DSM 2839 / NBRC 102507 / CH34) (Ralstonia metallidurans).